The chain runs to 836 residues: MEENPLRCTICKNDFEEPILFSCQHTTCRKCSNGSPSCKTCSPGPSTSRSHTPQPDKLAAFLLDASKEEMEQCANCEQITLPMFYCETCQQSLCLACRNVTHQARMFSSHKIISSEERSKVYSSSLCKDHNEPYILYCSDVRKLVCIQCFNGRPLEERHSFISIEQGHRMCLEKIEQSAAKLRFYQSERQEELNVRQRILDEASNFDDAKTSLYQLCQQIIDTVMTTRETLAKELVKQQEQSDEQCKRQIKEIEAVMGPVRLCLFSAQILCTTASKLDVLQLCPQLQKRISVLLDKTVDKLPVSSTPDSIEVRSDLAKSLEPYLGMSAAWCPISVSREGSSSNSYKRGSGSHKALSMLSKFQTTIDLAGAFGQLFGKVEHPLRQLVVELSSISQQVLETQRDLTIRRCIIEKEDVEKLVKMCKKIEASLGMHSAALDGMQSEMQEIWQEQLDRVRRQQIIYREKVEEILNLRETARQILTAAKQMVPYVSCILNMNAMIAPKRCHPPDPAPMESICLEITGIEPNSQNRIMAIEKEEENRRLNQEAKKKEELAGQSAAMKSLKHGKTKRKEMHHRMMLNTNRERSPGGTDSALTSPCIRRLTSTALKEETASELDAEEILDEIFELSGEQYEEVVDGTLTEEDRCSSALLLSLELQNESVSPLPSLEQLLGRISLASRVTSDIGFSRGAMLQSLNDVFALQKPPTPENISVSEERNVLASAVRNAEKRKSGAGLPTTSEKEEMIENDEIIVEKETETEKKKVIRRRVKKAECEQSEEDVTTTFTFGPPPDCPFVPQEIFDKLGESDEKLGTFEAKERVLQSLKQKMNQKNGIDNDN.

The RING-type zinc finger occupies 8–42; the sequence is CTICKNDFEEPILFSCQHTTCRKCSNGSPSCKTCS. The B box-type 1; atypical zinc finger occupies 68 to 115; that stretch reads EEMEQCANCEQITLPMFYCETCQQSLCLACRNVTHQARMFSSHKIISS. 4 residues coordinate Zn(2+): Cys-73, Cys-76, Cys-97, and His-102. The segment at 122 to 164 adopts a B box-type 2; degenerate zinc-finger fold; it reads YSSSLCKDHNEPYILYCSDVRKLVCIQCFNGRPLEERHSFISI. Residues 527–557 adopt a coiled-coil conformation; that stretch reads QNRIMAIEKEEENRRLNQEAKKKEELAGQSA. Over residues 540 to 552 the composition is skewed to basic and acidic residues; the sequence is RRLNQEAKKKEEL. Positions 540 to 571 are disordered; it reads RRLNQEAKKKEELAGQSAAMKSLKHGKTKRKE. The span at 561–571 shows a compositional bias: basic residues; the sequence is SLKHGKTKRKE.

This Caenorhabditis briggsae protein is Probable RING finger protein 207 homolog.